An 835-amino-acid polypeptide reads, in one-letter code: BCL11 transcription factor A (835 aa).

The segment covering Met1–Leu12 has biased composition (basic residues). The segment at Met1–Gly41 is disordered. A required for nuclear body formation and for SUMO1 recruitment region spans residues Met1–Arg210. A C2HC-type zinc finger spans residues Leu45–Cys71. 4 residues coordinate Zn(2+): Cys48, Cys51, His66, and Cys71. At Ser86 the chain carries Phosphoserine. Residues Lys123 and Lys164 each participate in a glycyl lysine isopeptide (Lys-Gly) (interchain with G-Cter in SUMO2) cross-link. Residues Tyr170–His193 form a C2H2-type 1 zinc finger. A Phosphoserine modification is found at Ser205. Arg271 carries the post-translational modification Asymmetric dimethylarginine. The segment at Ala323–Ser376 is disordered. A phosphoserine mark is found at Ser332 and Ser337. The span at Leu355–Pro372 shows a compositional bias: pro residues. 2 C2H2-type zinc fingers span residues Lys377–His399 and Tyr405–His429. Residues Lys421–Lys430 are compositionally biased toward basic residues. Disordered stretches follow at residues Lys421–Ser458, Lys471–Asp512, and Arg572–Lys619. The span at Gly441–Pro450 shows a compositional bias: polar residues. Residues Ser446 and Ser447 each carry the phosphoserine modification. Acidic residues predominate over residues Asn482–Thr506. Over residues His574–Thr584 the composition is skewed to basic and acidic residues. Position 608 is a phosphoserine (Ser608). Residue Lys620 forms a Glycyl lysine isopeptide (Lys-Gly) (interchain with G-Cter in SUMO2) linkage. Phosphoserine is present on residues Ser625 and Ser630. Residue Lys634 forms a Glycyl lysine isopeptide (Lys-Gly) (interchain with G-Cter in SUMO1) linkage. The tract at residues Asp678–Arg740 is disordered. Over residues Ser682 to Ser696 the composition is skewed to low complexity. The residue at position 701 (Thr701) is a Phosphothreonine. Gly residues predominate over residues Leu706–Gly720. The interval Glu737–Glu835 is DNA-binding. A C2H2-type 4 zinc finger spans residues Asp742–His764. Residues Cys744, Cys747, His760, and His764 each contribute to the Zn(2+) site. Residues Thr765–Pro769 form a disordered region. The C2H2-type 5 zinc finger occupies Tyr770–His792. The Zn(2+) site is built by Cys772, Cys775, His788, and His792. The tract at residues Gly793–Val799 is disordered. The C2H2-type 6 zinc-finger motif lies at Tyr800–His823. Cys802, Cys805, His818, and His823 together coordinate Zn(2+). Lys833 is covalently cross-linked (Glycyl lysine isopeptide (Lys-Gly) (interchain with G-Cter in SUMO2)).

As to quaternary structure, homotetrameric; self-associates via C2HC-type zinc finger domain. Interacts with MTA2, a component of the nucleosome remodeling and deacetylase (NuRD) repressor complex. Interacts (via its C2H2-type zinc finger domains 4, 5 and 6) with promoter region of gamma-globulin. Interacts with NR2F1, PIAS3, NR2F2 and NR2F6. Isoform 1, isoform 2 and isoform 3 form homodimers and heterodimers. Isoform 2 interacts with TBR1. Post-translationally, sumoylated with SUMO1. Expressed at high levels in brain, spleen thymus, bone marrow and testis. Expressed in CD34-positive myeloid precursor cells, B-cells, monocytes and megakaryocytes. Expression is tightly regulated during B-cell development. In terms of tissue distribution, expressed in fetal and adult brain, and in the plasmacytoid dendritic cell.

It is found in the cytoplasm. The protein localises to the nucleus. It localises to the chromosome. The protein resides in the nucleus matrix. Transcription factor. Associated with the BAF SWI/SNF chromatin remodeling complex. Binds to the 5'-TGACCA-3' sequence motif in regulatory regions of target genes, including a distal promoter of the HBG1 hemoglobin subunit gamma-1 gene. Involved in regulation of the developmental switch from gamma- to beta-globin, probably via direct repression of HBG1; hence indirectly repressing fetal hemoglobin (HbF) level. Involved in brain development. May play a role in hematopoiesis. Essential factor in lymphopoiesis required for B-cell formation in fetal liver. May function as a modulator of the transcriptional repression activity of NR2F2. The chain is BCL11 transcription factor A (BCL11A) from Homo sapiens (Human).